The chain runs to 1940 residues: Protein ORF1940 (1940 aa).

TPR repeat units follow at residues isoleucine 119–tyrosine 153, phenylalanine 155–isoleucine 186, arginine 480–glycine 513, and glycine 617–serine 652. 2 disordered regions span residues proline 1160–valine 1239 and lysine 1519–serine 1571. Over residues glutamine 1164–serine 1185 the composition is skewed to low complexity. Polar residues predominate over residues leucine 1186–lysine 1200. 3 stretches are compositionally biased toward low complexity: residues valine 1201 to leucine 1235, proline 1521 to proline 1539, and threonine 1561 to serine 1571. The stretch at lysine 1691–asparagine 1724 is one TPR 5 repeat. Residues threonine 1862–isoleucine 1940 are disordered. Positions threonine 1868–lysine 1883 are enriched in pro residues. Low complexity predominate over residues threonine 1884–threonine 1894. Over residues proline 1895–proline 1912 the composition is skewed to pro residues.

This Acidianus convivator (ATV) protein is Protein ORF1940.